We begin with the raw amino-acid sequence, 498 residues long: ATP synthase subunit beta, chloroplastic (498 aa).

172 to 179 is a binding site for ATP; that stretch reads GGAGVGKT.

Belongs to the ATPase alpha/beta chains family. F-type ATPases have 2 components, CF(1) - the catalytic core - and CF(0) - the membrane proton channel. CF(1) has five subunits: alpha(3), beta(3), gamma(1), delta(1), epsilon(1). CF(0) has four main subunits: a(1), b(1), b'(1) and c(9-12).

The protein localises to the plastid. Its subcellular location is the chloroplast thylakoid membrane. It catalyses the reaction ATP + H2O + 4 H(+)(in) = ADP + phosphate + 5 H(+)(out). Produces ATP from ADP in the presence of a proton gradient across the membrane. The catalytic sites are hosted primarily by the beta subunits. This Populus trichocarpa (Western balsam poplar) protein is ATP synthase subunit beta, chloroplastic.